Consider the following 335-residue polypeptide: tRNA N6-adenosine threonylcarbamoyltransferase (335 aa).

Fe cation is bound by residues His111 and His115. Substrate is bound by residues 133-137, Asp166, Gly179, and Asn276; that span reads LISGG. Asp301 is a binding site for Fe cation.

This sequence belongs to the KAE1 / TsaD family. It depends on Fe(2+) as a cofactor.

The protein resides in the cytoplasm. It catalyses the reaction L-threonylcarbamoyladenylate + adenosine(37) in tRNA = N(6)-L-threonylcarbamoyladenosine(37) in tRNA + AMP + H(+). Functionally, required for the formation of a threonylcarbamoyl group on adenosine at position 37 (t(6)A37) in tRNAs that read codons beginning with adenine. Is involved in the transfer of the threonylcarbamoyl moiety of threonylcarbamoyl-AMP (TC-AMP) to the N6 group of A37, together with TsaE and TsaB. TsaD likely plays a direct catalytic role in this reaction. This chain is tRNA N6-adenosine threonylcarbamoyltransferase, found in Wolbachia pipientis wMel.